Reading from the N-terminus, the 244-residue chain is Ureidoacrylate amidohydrolase RutB (244 aa).

The Proton acceptor role is filled by Asp-38. Lys-147 is an active-site residue. The active-site Nucleophile is the Cys-180.

The protein belongs to the isochorismatase family. RutB subfamily.

It carries out the reaction (Z)-3-ureidoacrylate + H2O + H(+) = (Z)-3-aminoacrylate + NH4(+) + CO2. It catalyses the reaction (Z)-3-ureidoacrylate + H2O = (Z)-3-aminoacrylate + carbamate + H(+). The catalysed reaction is (Z)-2-methylureidoacrylate + H2O + H(+) = (Z)-2-methylaminoacrylate + NH4(+) + CO2. Functionally, hydrolyzes ureidoacrylate to form aminoacrylate and carbamate. The carbamate hydrolyzes spontaneously, thereby releasing one of the nitrogen atoms of the pyrimidine ring as ammonia and one of its carbon atoms as CO2. This Shigella sonnei (strain Ss046) protein is Ureidoacrylate amidohydrolase RutB.